Here is a 305-residue protein sequence, read N- to C-terminus: GTP cyclohydrolase FolE2 (305 aa).

This sequence belongs to the GTP cyclohydrolase IV family.

It carries out the reaction GTP + H2O = 7,8-dihydroneopterin 3'-triphosphate + formate + H(+). The protein operates within cofactor biosynthesis; 7,8-dihydroneopterin triphosphate biosynthesis; 7,8-dihydroneopterin triphosphate from GTP: step 1/1. In terms of biological role, converts GTP to 7,8-dihydroneopterin triphosphate. This Xanthomonas axonopodis pv. citri (strain 306) protein is GTP cyclohydrolase FolE2.